The primary structure comprises 115 residues: NAD(P)H-quinone oxidoreductase subunit M (115 aa).

Belongs to the complex I NdhM subunit family. NDH-1 can be composed of about 15 different subunits; different subcomplexes with different compositions have been identified which probably have different functions.

The protein localises to the cellular thylakoid membrane. The catalysed reaction is a plastoquinone + NADH + (n+1) H(+)(in) = a plastoquinol + NAD(+) + n H(+)(out). It catalyses the reaction a plastoquinone + NADPH + (n+1) H(+)(in) = a plastoquinol + NADP(+) + n H(+)(out). NDH-1 shuttles electrons from an unknown electron donor, via FMN and iron-sulfur (Fe-S) centers, to quinones in the respiratory and/or the photosynthetic chain. The immediate electron acceptor for the enzyme in this species is believed to be plastoquinone. Couples the redox reaction to proton translocation, and thus conserves the redox energy in a proton gradient. Cyanobacterial NDH-1 also plays a role in inorganic carbon-concentration. This Prochlorococcus marinus (strain NATL1A) protein is NAD(P)H-quinone oxidoreductase subunit M.